A 449-amino-acid polypeptide reads, in one-letter code: Glucose-6-phosphate isomerase (449 aa).

The active-site Proton donor is the E291. Active-site residues include H312 and K426.

Belongs to the GPI family.

It is found in the cytoplasm. The catalysed reaction is alpha-D-glucose 6-phosphate = beta-D-fructose 6-phosphate. It participates in carbohydrate biosynthesis; gluconeogenesis. The protein operates within carbohydrate degradation; glycolysis; D-glyceraldehyde 3-phosphate and glycerone phosphate from D-glucose: step 2/4. Functionally, catalyzes the reversible isomerization of glucose-6-phosphate to fructose-6-phosphate. This Clostridium botulinum (strain Eklund 17B / Type B) protein is Glucose-6-phosphate isomerase.